An 894-amino-acid chain; its full sequence is Histone-lysine N-methyltransferase PRDM9 (894 aa).

Disordered regions lie at residues 1 to 23 (MSPE…RKPM) and 143 to 174 (SGSE…LRKK). One can recognise a KRAB-related domain in the interval 23-86 (MVKDAFKDIS…RRQAIKLQVD (64 aa)). Polar residues predominate over residues 143–164 (SGSEQAQKPVSPSGEASTSGQH). Residues C205, C208, C216, and H219 each contribute to the Zn(2+) site. Positions 244-358 (PGLRIGPSGI…PGCELLVWYG (115 aa)) constitute an SET domain. Residues 256–258 (AGL), Y291, and 320–321 (NC) contribute to the S-adenosyl-L-methionine site. 288-294 (NNGYSWL) serves as a coordination point for substrate. Y357 lines the substrate pocket. Position 368 is an N6,N6,N6-trimethyllysine; alternate (K368). Position 368 is an N6-methyllysine; alternate (K368). An N6-methyllysine mark is found at K372 and K374. Residues 388 to 411 (HPCPSCCLAFSSQKFLSQHVERNH) form a C2H2-type 1 zinc finger. C390, C393, H406, and H411 together coordinate Zn(2+). The segment at 408–469 (ERNHSSQNFP…SKLLNKRTWQ (62 aa)) is disordered. Residues 444–461 (PHSRNDKTKGQEIKERSK) are compositionally biased toward basic and acidic residues. A C2H2-type 2; degenerate zinc finger spans residues 524-546 (VKYGECGQGFSVKSDVITHQRTH). C2H2-type zinc fingers lie at residues 552–574 (YVCR…QRIH), 580–602 (YVCR…QRTH), 608–630 (YVCR…QRRH), 636–658 (YVCR…QRRH), 664–686 (YVCR…QRTH), 692–714 (YVCR…QRTH), 720–742 (YVCR…QRTH), 748–770 (YVCR…QRTH), 776–798 (YVCR…QRTH), 804–826 (YVCR…QRTH), 832–854 (YVCR…QRTH), and 860–882 (YVCR…QRTH). Zn(2+)-binding residues include C722, C725, H738, H742, C750, C753, H766, H770, C778, C781, H794, H798, C806, C809, H822, and H826. The interval 730 to 820 (SNKSHLLRHQ…RGFSNKSHLL (91 aa)) is DNA-binding.

It belongs to the class V-like SAM-binding methyltransferase superfamily. In terms of assembly, homodimer. Interacts with EHMT2 and CDYL; interaction only takes place when PRDM9 is bound to hotspot DNA. Interacts with CXXC1; this interaction does not link PRDM9-activated recombination hotspot sites with DSB machinery and is not required for the hotspot recognition pathway. Forms a complex with EWSR1, REC8, SYCP3 and SYCP1; complex formation is dependent of phosphorylated form of REC8 and requires PRDM9 bound to hotspot DNA; EWSR1 joins PRDM9 with the chromosomal axis through REC8. In terms of processing, mono-methylated; automethylated. Tri-methylated; automethylated. Mono-methylation is predominant; automethylation is lower and slower than H3 peptide methylation and is in a highest S-adenosyl-L-methionine concentration-dependent. There are two major sites for automethylation at Lys-368 and Lys-374. Lysines can be simultaneously methylated, such as Lys-368(me3)/Lys-372(me1), Lys-368(me1)/Lys-374(me1) and Lys-368(me1)/Lys-372(me1)/Lys-374(me1). Automethylation is an intramolecular (cis) process.

It is found in the nucleus. Its subcellular location is the chromosome. The enzyme catalyses L-lysyl-[protein] + S-adenosyl-L-methionine = N(6)-methyl-L-lysyl-[protein] + S-adenosyl-L-homocysteine + H(+). The catalysed reaction is N(6)-methyl-L-lysyl-[protein] + S-adenosyl-L-methionine = N(6),N(6)-dimethyl-L-lysyl-[protein] + S-adenosyl-L-homocysteine + H(+). It catalyses the reaction L-lysyl(4)-[histone H3] + 3 S-adenosyl-L-methionine = N(6),N(6),N(6)-trimethyl-L-lysyl(4)-[histone H3] + 3 S-adenosyl-L-homocysteine + 3 H(+). It carries out the reaction L-lysyl(36)-[histone H3] + 3 S-adenosyl-L-methionine = N(6),N(6),N(6)-trimethyl-L-lysyl(36)-[histone H3] + 3 S-adenosyl-L-homocysteine + 3 H(+). The enzyme catalyses L-lysyl(9)-[histone H3] + 3 S-adenosyl-L-methionine = N(6),N(6),N(6)-trimethyl-L-lysyl(9)-[histone H3] + 3 S-adenosyl-L-homocysteine + 3 H(+). The catalysed reaction is L-lysyl(20)-[histone H4] + S-adenosyl-L-methionine = N(6)-methyl-L-lysyl(20)-[histone H4] + S-adenosyl-L-homocysteine + H(+). It catalyses the reaction N(6)-methyl-L-lysyl(20)-[histone H4] + S-adenosyl-L-methionine = N(6),N(6)-dimethyl-L-lysyl(20)-[histone H4] + S-adenosyl-L-homocysteine + H(+). Inhibited by suramin with an IC(50) of 4.1 uM. Its function is as follows. Histone methyltransferase that sequentially mono-, di-, and tri-methylates both 'Lys-4' (H3K4) and 'Lys-36' (H3K36) of histone H3 to produce respectively trimethylated 'Lys-4' (H3K4me3) and trimethylated 'Lys-36' (H3K36me3) histone H3 and plays a key role in meiotic prophase by determining hotspot localization thereby promoting meiotic recombination. Can also methylate all four core histones with H3 being the best substrate and the most highly modified. Is also able, on one hand, to mono and di-methylate H4K20 and on other hand to trimethylate H3K9 with the di-methylated H3K9 as the best substrate. During meiotic prophase, binds specific DNA sequences through its zinc finger domains thereby determining hotspot localization where it promotes local H3K4me3 and H3K36me3 enrichment on the same nucleosomes through its histone methyltransferase activity. Thereby promotes double-stranded breaks (DSB) formation, at this subset of PRDM9-binding sites, that initiates meiotic recombination for the proper meiotic progression. During meiotic progression hotspot-bound PRDM9 interacts with several complexes; in early leptonema binds CDYL and EHMT2 followed by EWSR1 and CXXC1 by the end of leptonema. EWSR1 joins PRDM9 with the chromosomal axis through REC8. In this way, controls the DSB repair pathway, pairing of homologous chromosomes and sex body formation. Moreover plays a central role in the transcriptional activation of genes during early meiotic prophase thanks to H3K4me3 and H3K36me3 enrichment that represents a specific tag for epigenetic transcriptional activation. In addition performs automethylation. Acetylation and phosphorylation of histone H3 attenuate or prevent histone H3 methylation. In Homo sapiens (Human), this protein is Histone-lysine N-methyltransferase PRDM9.